The following is a 152-amino-acid chain: Xanthine-guanine phosphoribosyltransferase (152 aa).

Residues 37–38 and 88–96 each bind 5-phospho-alpha-D-ribose 1-diphosphate; these read RG and DDLVDTGGT. D89 contacts Mg(2+). D92 and I135 together coordinate guanine. Xanthine-binding residues include D92 and I135. Residues 92 to 96 and 134 to 135 each bind GMP; these read DTGGT and WI.

This sequence belongs to the purine/pyrimidine phosphoribosyltransferase family. XGPT subfamily. As to quaternary structure, homotetramer. The cofactor is Mg(2+).

The protein resides in the cell inner membrane. The catalysed reaction is GMP + diphosphate = guanine + 5-phospho-alpha-D-ribose 1-diphosphate. The enzyme catalyses XMP + diphosphate = xanthine + 5-phospho-alpha-D-ribose 1-diphosphate. It catalyses the reaction IMP + diphosphate = hypoxanthine + 5-phospho-alpha-D-ribose 1-diphosphate. Its pathway is purine metabolism; GMP biosynthesis via salvage pathway; GMP from guanine: step 1/1. It participates in purine metabolism; XMP biosynthesis via salvage pathway; XMP from xanthine: step 1/1. Purine salvage pathway enzyme that catalyzes the transfer of the ribosyl-5-phosphate group from 5-phospho-alpha-D-ribose 1-diphosphate (PRPP) to the N9 position of the 6-oxopurines guanine and xanthine to form the corresponding ribonucleotides GMP (guanosine 5'-monophosphate) and XMP (xanthosine 5'-monophosphate), with the release of PPi. To a lesser extent, also acts on hypoxanthine. In Yersinia enterocolitica serotype O:8 / biotype 1B (strain NCTC 13174 / 8081), this protein is Xanthine-guanine phosphoribosyltransferase.